Reading from the N-terminus, the 390-residue chain is 1-deoxy-D-xylulose 5-phosphate reductoisomerase (390 aa).

Residues Thr10, Gly11, Ser12, Val13, and Asn124 each coordinate NADPH. Residue Lys125 participates in 1-deoxy-D-xylulose 5-phosphate binding. Glu126 serves as a coordination point for NADPH. Asp150 is a Mn(2+) binding site. The 1-deoxy-D-xylulose 5-phosphate site is built by Ser151, Glu152, Ser181, and His204. Glu152 is a Mn(2+) binding site. Gly210 serves as a coordination point for NADPH. The 1-deoxy-D-xylulose 5-phosphate site is built by Ser217, Asn222, Lys223, and Glu226. Position 226 (Glu226) interacts with Mn(2+).

This sequence belongs to the DXR family. Mg(2+) is required as a cofactor. It depends on Mn(2+) as a cofactor.

It catalyses the reaction 2-C-methyl-D-erythritol 4-phosphate + NADP(+) = 1-deoxy-D-xylulose 5-phosphate + NADPH + H(+). The protein operates within isoprenoid biosynthesis; isopentenyl diphosphate biosynthesis via DXP pathway; isopentenyl diphosphate from 1-deoxy-D-xylulose 5-phosphate: step 1/6. Functionally, catalyzes the NADPH-dependent rearrangement and reduction of 1-deoxy-D-xylulose-5-phosphate (DXP) to 2-C-methyl-D-erythritol 4-phosphate (MEP). This is 1-deoxy-D-xylulose 5-phosphate reductoisomerase from Janthinobacterium sp. (strain Marseille) (Minibacterium massiliensis).